The chain runs to 41 residues: Large ribosomal subunit protein bL36 (41 aa).

This sequence belongs to the bacterial ribosomal protein bL36 family.

The sequence is that of Large ribosomal subunit protein bL36 from Beijerinckia indica subsp. indica (strain ATCC 9039 / DSM 1715 / NCIMB 8712).